The sequence spans 314 residues: Acetyl-coenzyme A carboxylase carboxyl transferase subunit alpha (314 aa).

One can recognise a CoA carboxyltransferase C-terminal domain in the interval 38-292 (RLERKSAALL…ANAIDEELDA (255 aa)).

The protein belongs to the AccA family. Acetyl-CoA carboxylase is a heterohexamer composed of biotin carboxyl carrier protein (AccB), biotin carboxylase (AccC) and two subunits each of ACCase subunit alpha (AccA) and ACCase subunit beta (AccD).

It localises to the cytoplasm. It carries out the reaction N(6)-carboxybiotinyl-L-lysyl-[protein] + acetyl-CoA = N(6)-biotinyl-L-lysyl-[protein] + malonyl-CoA. Its pathway is lipid metabolism; malonyl-CoA biosynthesis; malonyl-CoA from acetyl-CoA: step 1/1. In terms of biological role, component of the acetyl coenzyme A carboxylase (ACC) complex. First, biotin carboxylase catalyzes the carboxylation of biotin on its carrier protein (BCCP) and then the CO(2) group is transferred by the carboxyltransferase to acetyl-CoA to form malonyl-CoA. The sequence is that of Acetyl-coenzyme A carboxylase carboxyl transferase subunit alpha from Erythrobacter litoralis (strain HTCC2594).